A 295-amino-acid polypeptide reads, in one-letter code: Phosphatidylserine decarboxylase proenzyme (295 aa).

Active-site charge relay system; for autoendoproteolytic cleavage activity residues include aspartate 113, histidine 169, and serine 256. The Schiff-base intermediate with substrate; via pyruvic acid; for decarboxylase activity role is filled by serine 256. Serine 256 carries the post-translational modification Pyruvic acid (Ser); by autocatalysis.

This sequence belongs to the phosphatidylserine decarboxylase family. PSD-B subfamily. Prokaryotic type II sub-subfamily. Heterodimer of a large membrane-associated beta subunit and a small pyruvoyl-containing alpha subunit. It depends on pyruvate as a cofactor. Post-translationally, is synthesized initially as an inactive proenzyme. Formation of the active enzyme involves a self-maturation process in which the active site pyruvoyl group is generated from an internal serine residue via an autocatalytic post-translational modification. Two non-identical subunits are generated from the proenzyme in this reaction, and the pyruvate is formed at the N-terminus of the alpha chain, which is derived from the carboxyl end of the proenzyme. The autoendoproteolytic cleavage occurs by a canonical serine protease mechanism, in which the side chain hydroxyl group of the serine supplies its oxygen atom to form the C-terminus of the beta chain, while the remainder of the serine residue undergoes an oxidative deamination to produce ammonia and the pyruvoyl prosthetic group on the alpha chain. During this reaction, the Ser that is part of the protease active site of the proenzyme becomes the pyruvoyl prosthetic group, which constitutes an essential element of the active site of the mature decarboxylase.

The protein localises to the cell membrane. It catalyses the reaction a 1,2-diacyl-sn-glycero-3-phospho-L-serine + H(+) = a 1,2-diacyl-sn-glycero-3-phosphoethanolamine + CO2. The protein operates within phospholipid metabolism; phosphatidylethanolamine biosynthesis; phosphatidylethanolamine from CDP-diacylglycerol: step 2/2. Its function is as follows. Catalyzes the formation of phosphatidylethanolamine (PtdEtn) from phosphatidylserine (PtdSer). The sequence is that of Phosphatidylserine decarboxylase proenzyme from Clostridium botulinum (strain ATCC 19397 / Type A).